Here is a 283-residue protein sequence, read N- to C-terminus: MKQYLQLCQRIVDEGVWVKNERTGINCLTVINADLEYDVANNQFPLITTRKSYYKSAIAELLGYLRGYNSAAQFRDIGCKTWDANANENQAWLNNPNRKGEDDMGRVYGVQGRSWQKPDGSHLDQLKKVINNLSKGIDDRGEIVTFYNPGEFELGCLRPCMHTHNFSLLGDTLYLTSYQRSCDVPLGLNFNQIQCFALLALVAQITGHKPGKAYHKIVNAHIYENQLELMRDVQLKREPFPSPQLHINPEIKSLEDIETWVSKDDFIVSGYQCHDPIKYPFAV.

Arg-22 is a dUMP binding site. Catalysis depends on Cys-160, which acts as the Nucleophile. DUMP is bound by residues 180–183, Asn-191, and 221–223; these read RSCD and HIY. Asp-183 is a (6R)-5,10-methylene-5,6,7,8-tetrahydrofolate binding site. Ala-282 provides a ligand contact to (6R)-5,10-methylene-5,6,7,8-tetrahydrofolate.

This sequence belongs to the thymidylate synthase family. Bacterial-type ThyA subfamily. In terms of assembly, homodimer.

It localises to the cytoplasm. The enzyme catalyses dUMP + (6R)-5,10-methylene-5,6,7,8-tetrahydrofolate = 7,8-dihydrofolate + dTMP. The protein operates within pyrimidine metabolism; dTTP biosynthesis. Functionally, catalyzes the reductive methylation of 2'-deoxyuridine-5'-monophosphate (dUMP) to 2'-deoxythymidine-5'-monophosphate (dTMP) while utilizing 5,10-methylenetetrahydrofolate (mTHF) as the methyl donor and reductant in the reaction, yielding dihydrofolate (DHF) as a by-product. This enzymatic reaction provides an intracellular de novo source of dTMP, an essential precursor for DNA biosynthesis. This is Thymidylate synthase from Idiomarina loihiensis (strain ATCC BAA-735 / DSM 15497 / L2-TR).